The sequence spans 56 residues: Photosystem II reaction center protein K (56 aa).

The propeptide occupies 1 to 19; it reads MLNFLLQNTFVLWSNFILC. Residues 35–55 traverse the membrane as a helical segment; that stretch reads MPVIPVFFFLLAFVWQAAVSF.

This sequence belongs to the PsbK family. PSII is composed of 1 copy each of membrane proteins PsbA, PsbB, PsbC, PsbD, PsbE, PsbF, PsbH, PsbI, PsbJ, PsbK, PsbL, PsbM, PsbT, PsbX, PsbY, PsbZ, Psb30/Ycf12, at least 3 peripheral proteins of the oxygen-evolving complex and a large number of cofactors. It forms dimeric complexes.

Its subcellular location is the plastid. The protein resides in the chloroplast thylakoid membrane. Functionally, one of the components of the core complex of photosystem II (PSII). PSII is a light-driven water:plastoquinone oxidoreductase that uses light energy to abstract electrons from H(2)O, generating O(2) and a proton gradient subsequently used for ATP formation. It consists of a core antenna complex that captures photons, and an electron transfer chain that converts photonic excitation into a charge separation. This chain is Photosystem II reaction center protein K, found in Welwitschia mirabilis (Tree tumbo).